A 179-amino-acid polypeptide reads, in one-letter code: Protein U (179 aa).

Positions 1 to 25 (MNAIKTAVAAVTAAASLVAFSPAEA) are cleaved as a signal peptide.

It is found in the secreted. Its subcellular location is the spore. The protein resides in the perispore. Functionally, a late-developmental spore coat protein. The chain is Protein U (pru) from Myxococcus xanthus.